A 1000-amino-acid polypeptide reads, in one-letter code: MRALAQRSDRRLLLLVVLSVMILETVTNQDLPVIKCVLISHENNGSSAGKPSSYRMVRGSPEDLQCTPRRQSEGTVYEAATVEVAESGSITLQVQLATPGDLSCLWVFKHSSLGCQPHFDLQNRGIVSMAILNVTETQAGEYLLHIQSEAANYTVLFTVNVRDTQLYVLRRPYFRKMENQDALLCISEGVPEPTVEWVLCSSHRESCKEEGPAVVRKEEKVLHELFGTDIRCCARNALGRESTKLFTIDLNQAPQSTLPQLFLKVGEPLWIRCKAIHVNHGFGLTWELEDKALEEGSYFEMSTYSTNRTMIRILLAFVSSVGRNDTGYYTCSSSKHPSQSALVTILEKGFINATSSQEEYEIDPYEKFCFSVRFKAYPRIRCTWIFSQASFPCEQRGLEDGYSISKFCDHKNKPGEYIFYAENDDAQFTKMFTLNIRKKPQVLANASASQASCSSDGYPLPSWTWKKCSDKSPNCTEEIPEGVWNKKANRKVFGQWVSSSTLNMSEAGKGLLVKCCAYNSMGTSCETIFLNSPGPFPFIQDNISFYATIGLCLPFIVVLIVLICHKYKKQFRYESQLQMIQVTGPLDNEYFYVDFRDYEYDLKWEFPRENLEFGKVLGSGAFGRVMNATAYGISKTGVSIQVAVKMLKEKADSCEKEALMSELKMMTHLGHHDNIVNLLGACTLSGPVYLIFEYCCYGDLLNYLRSKREKFHRTWTEIFKEHNFSFYPTFQAHSNSSMPGSREVQLHPPLDQLSGFNGNSIHSEDEIEYENQKRLAEEEEEDLNVLTFEDLLCFAYQVAKGMEFLEFKSCVHRDLAARNVLVTHGKVVKICDFGLARDILSDSSYVVRGNARLPVKWMAPESLFEGIYTIKSDVWSYGILLWEIFSLGVNPYPGIPVDANFYKLIQSGFKMEQPFYATEGIYFVMQSCWAFDSRKRPSFPNLTSFLGCQLAEAEEAMYQNMGGNVPEHPSIYQNRRPLSREAGSEPPSPQAQVKIHRERS.

Residues 1–27 form the signal peptide; sequence MRALAQRSDRRLLLLVVLSVMILETVT. Over 28 to 544 the chain is Extracellular; that stretch reads NQDLPVIKCV…PFPFIQDNIS (517 aa). Intrachain disulfides connect Cys-36/Cys-66 and Cys-104/Cys-115. A glycan (N-linked (GlcNAc...) asparagine) is linked at Asn-44. The interval 45 to 67 is disordered; sequence GSSAGKPSSYRMVRGSPEDLQCT. N-linked (GlcNAc...) asparagine glycans are attached at residues Asn-133 and Asn-152. Intrachain disulfides connect Cys-200–Cys-207 and Cys-273–Cys-331. In terms of domain architecture, Ig-like C2-type spans 254-344; the sequence is PQSTLPQLFL…KHPSQSALVT (91 aa). N-linked (GlcNAc...) asparagine glycosylation is found at Asn-307, Asn-324, and Asn-352. Disulfide bonds link Cys-369–Cys-408 and Cys-382–Cys-393. N-linked (GlcNAc...) asparagine glycans are attached at residues Asn-445, Asn-474, Asn-503, and Asn-542. The chain crosses the membrane as a helical span at residues 545–564; that stretch reads FYATIGLCLPFIVVLIVLIC. At 565-992 the chain is on the cytoplasmic side; that stretch reads HKYKKQFRYE…GSEPPSPQAQ (428 aa). Tyr-573 carries the post-translational modification Phosphotyrosine. Ser-575 carries the post-translational modification Phosphoserine. A phosphotyrosine; by autocatalysis mark is found at Tyr-590 and Tyr-592. The important for normal regulation of the kinase activity and for maintaining the kinase in an inactive state in the absence of ligand binding stretch occupies residues 592 to 598; it reads YVDFRDY. The residue at position 600 (Tyr-600) is a Phosphotyrosine. Residues 611–946 enclose the Protein kinase domain; it reads LEFGKVLGSG…PSFPNLTSFL (336 aa). Residues 617–625 and Lys-645 contribute to the ATP site; that span reads LGSGAFGRV. Tyr-727 is subject to Phosphotyrosine; by autocatalysis. Ser-760 bears the Phosphoserine mark. Phosphotyrosine occurs at positions 769 and 796. Asp-814 (proton acceptor) is an active-site residue. Tyr-845 is subject to Phosphotyrosine; by autocatalysis. A phosphotyrosine mark is found at Tyr-958 and Tyr-972. The tract at residues 968 to 1000 is disordered; that stretch reads HPSIYQNRRPLSREAGSEPPSPQAQVKIHRERS. A Phosphoserine modification is found at Ser-1000.

It belongs to the protein kinase superfamily. Tyr protein kinase family. CSF-1/PDGF receptor subfamily. As to quaternary structure, monomer in the absence of bound FLT3LG. Homodimer in the presence of bound FLT3LG. Interacts with FIZ1 following ligand activation. Interacts with FES, FER, LYN, FGR, HCK, SRC and GRB2. Interacts with PTPRJ/DEP-1 and PTPN11/SHP2. Interacts with RNF115 and RNF126. In terms of processing, N-glycosylated, contains complex N-glycans with sialic acid. Post-translationally, autophosphorylated on several tyrosine residues in response to FLT3LG binding. FLT3LG binding also increases phosphorylation of mutant kinases that are constitutively activated. Dephosphorylated by PTPRJ/DEP-1, PTPN1, PTPN6/SHP-1, and to a lesser degree by PTPN12. Dephosphorylation is important for export from the endoplasmic reticulum and location at the cell membrane. Rapidly ubiquitinated by UBE2L6 and the E3 ubiquitin-protein ligase SIAH1 after autophosphorylation, leading to its proteasomal degradation. As to expression, hematopoietic stem and progenitor cell-enriched populations. Found in brain, placenta and testis.

It localises to the membrane. It is found in the endoplasmic reticulum lumen. It catalyses the reaction L-tyrosyl-[protein] + ATP = O-phospho-L-tyrosyl-[protein] + ADP + H(+). Present in an inactive conformation in the absence of bound ligand. FLT3LG binding leads to dimerization and activation by autophosphorylation. Its function is as follows. Tyrosine-protein kinase that acts as a cell-surface receptor for the cytokine FLT3LG and regulates differentiation, proliferation and survival of hematopoietic progenitor cells and of dendritic cells. Promotes phosphorylation of SHC1 and AKT1, and activation of the downstream effector MTOR. Promotes activation of RAS signaling and phosphorylation of downstream kinases, including MAPK1/ERK2 and/or MAPK3/ERK1. Promotes phosphorylation of FES, FER, PTPN6/SHP, PTPN11/SHP-2, PLCG1, and STAT5A and/or STAT5B. Activation of wild-type FLT3 causes only marginal activation of STAT5A or STAT5B. Mutations that cause constitutive kinase activity promote cell proliferation and resistance to apoptosis via the activation of multiple signaling pathways. The polypeptide is Receptor-type tyrosine-protein kinase FLT3 (Flt3) (Mus musculus (Mouse)).